A 232-amino-acid chain; its full sequence is Protein lin-7 homolog A (232 aa).

The Kinase interacting site motif lies at 14–28 (MATLTVVQPLTLDRD). An L27 domain is found at 25 to 80 (LDRDVARAIELLEKLQESGEVPVHKLQSLKKVLQSEFCTAIREVYQYMHETITVNG). The region spanning 108–190 (VVELPKTDEG…SVKLVVRYTP (83 aa)) is the PDZ domain.

This sequence belongs to the lin-7 family. As to quaternary structure, forms a complex with CASK and CASKIN1. Component of the brain-specific heterotrimeric complex (LIN-10-LIN-2-LIN-7 complex) composed of at least APBA1, CASK, and LIN7, which associates with the motor protein KIF17 to transport vesicles along microtubules. Can also interact with other modular proteins containing protein-protein interaction domains like PALS1, PALS2, MPP7, DLG1, DLG2 and DLG3 through its L27 domain. Interacts with DLG4 and GRIN2B as well as CDH1 and CTNNB1, the channels KCNJ12/Kir2.2, KCNJ4/Kir2.3 and probably KCNJ2/Kir2.1 and SLC6A12/BGT-1 via its PDZ domain. The association of LIN7A with cadherin and beta-catenin is calcium-dependent, occurs at synaptic junctions and requires the actin cytoskeleton. Interacts with EGFR, ERBB2, ERBB3 and ERBB4 with both PDZ and KID domains. Associates with KIF17 via APBA1. Interacts with HTR4. Forms a tripartite complex composed of DLG1, MPP7 and LIN7 (LIN7A or LIN7C). Interacts with MARCHF11. Ubiquitously expressed in brain and detected in lung, liver and testis (at protein level). Expression was detected only in brain.

It is found in the cell membrane. It localises to the basolateral cell membrane. The protein resides in the cell junction. The protein localises to the postsynaptic density membrane. Its subcellular location is the tight junction. Functionally, plays a role in establishing and maintaining the asymmetric distribution of channels and receptors at the plasma membrane of polarized cells. Forms membrane-associated multiprotein complexes that may regulate delivery and recycling of proteins to the correct membrane domains. The tripartite complex composed of LIN7 (LIN7A, LIN7B or LIN7C), CASK and APBA1 associates with the motor protein KIF17 to transport vesicles containing N-methyl-D-aspartate (NMDA) receptor subunit NR2B along microtubules. This complex may have the potential to couple synaptic vesicle exocytosis to cell adhesion in brain. Ensures the proper localization of GRIN2B (subunit 2B of the NMDA receptor) to neuronal postsynaptic density and may function in localizing synaptic vesicles at synapses where it is recruited by beta-catenin and cadherin. Required to localize Kir2 channels, GABA transporter (SLC6A12) and EGFR/ERBB1, ERBB2, ERBB3 and ERBB4 to the basolateral membrane of epithelial cells. This chain is Protein lin-7 homolog A (Lin7a), found in Rattus norvegicus (Rat).